The sequence spans 707 residues: Elongation factor G (707 aa).

Positions 9 to 293 constitute a tr-type G domain; the sequence is HDVRNIGIMA…GVVDYLPSPE (285 aa). GTP is bound by residues 18 to 25, 90 to 94, and 144 to 147; these read AHIDAGKT, DTPGH, and NKMD.

The protein belongs to the TRAFAC class translation factor GTPase superfamily. Classic translation factor GTPase family. EF-G/EF-2 subfamily.

The protein resides in the cytoplasm. Catalyzes the GTP-dependent ribosomal translocation step during translation elongation. During this step, the ribosome changes from the pre-translocational (PRE) to the post-translocational (POST) state as the newly formed A-site-bound peptidyl-tRNA and P-site-bound deacylated tRNA move to the P and E sites, respectively. Catalyzes the coordinated movement of the two tRNA molecules, the mRNA and conformational changes in the ribosome. The sequence is that of Elongation factor G from Bifidobacterium longum (strain DJO10A).